Consider the following 129-residue polypeptide: Small ribosomal subunit protein uS11 (129 aa).

The protein belongs to the universal ribosomal protein uS11 family. In terms of assembly, part of the 30S ribosomal subunit. Interacts with proteins S7 and S18. Binds to IF-3.

Functionally, located on the platform of the 30S subunit, it bridges several disparate RNA helices of the 16S rRNA. Forms part of the Shine-Dalgarno cleft in the 70S ribosome. The chain is Small ribosomal subunit protein uS11 from Rhodopseudomonas palustris (strain BisB5).